A 50-amino-acid polypeptide reads, in one-letter code: Large ribosomal subunit protein bL33 (50 aa).

The protein belongs to the bacterial ribosomal protein bL33 family.

This is Large ribosomal subunit protein bL33 from Fusobacterium nucleatum subsp. nucleatum (strain ATCC 25586 / DSM 15643 / BCRC 10681 / CIP 101130 / JCM 8532 / KCTC 2640 / LMG 13131 / VPI 4355).